The sequence spans 388 residues: Transposase for insertion sequence element IS406 (388 aa).

Belongs to the transposase mutator family.

Required for the transposition of the insertion element. The chain is Transposase for insertion sequence element IS406 from Burkholderia multivorans (strain ATCC 17616 / 249).